We begin with the raw amino-acid sequence, 737 residues long: Catalase-peroxidase (737 aa).

An N-terminal signal peptide occupies residues 1 to 23; it reads MLKKILPVLITLAIVHNTPTAWA. A cross-link (tryptophyl-tyrosyl-methioninium (Trp-Tyr) (with M-249)) is located at residues 102–223; sequence WHGAGTYRIY…LAATQMGLIY (122 aa). Residue His103 is the Proton acceptor of the active site. The tryptophyl-tyrosyl-methioninium (Tyr-Met) (with W-102) cross-link spans 223–249; sequence YVNPEGPNGKPDPVAAAKDIREAFARM. His264 contributes to the heme b binding site.

It belongs to the peroxidase family. Peroxidase/catalase subfamily. As to quaternary structure, homodimer or homotetramer. Requires heme b as cofactor. In terms of processing, formation of the three residue Trp-Tyr-Met cross-link is important for the catalase, but not the peroxidase activity of the enzyme.

The enzyme catalyses H2O2 + AH2 = A + 2 H2O. It carries out the reaction 2 H2O2 = O2 + 2 H2O. In terms of biological role, bifunctional enzyme with both catalase and broad-spectrum peroxidase activity. In Yersinia pseudotuberculosis serotype I (strain IP32953), this protein is Catalase-peroxidase.